We begin with the raw amino-acid sequence, 115 residues long: Large ribosomal subunit protein bL19 (115 aa).

It belongs to the bacterial ribosomal protein bL19 family.

In terms of biological role, this protein is located at the 30S-50S ribosomal subunit interface and may play a role in the structure and function of the aminoacyl-tRNA binding site. In Streptococcus suis (strain 98HAH33), this protein is Large ribosomal subunit protein bL19.